The following is a 172-amino-acid chain: Translocator protein 2 (172 aa).

Transmembrane regions (helical) follow at residues 3–23 (PQGA…SLLT), 45–65 (VLLA…YLVW), 80–100 (LGLY…FFAA), 104–124 (GLAL…ALIW), and 130–150 (LAAV…SIAY).

The protein belongs to the TspO/BZRP family. In terms of assembly, homotetramer. May also form homodimer. In terms of tissue distribution, expressed in erythrocytes (at protein level).

The protein localises to the endoplasmic reticulum membrane. The protein resides in the cell membrane. Functionally, cholesterol-binding protein involved in the redistribution of cholesterol from lipid droplets to the endoplasmic reticulum. Required to meet cholesterol demands during erythropoietic differentiation. May play a role in transport processes at the plasma membrane of erythrocytes, including regulating VDAC-mediated ATP export, and import of the heme precursors protoporphyrin IX and 5-aminolevulinic acid. In Canis lupus familiaris (Dog), this protein is Translocator protein 2.